Reading from the N-terminus, the 178-residue chain is Caveolin-1 (178 aa).

S2 is subject to N-acetylserine. S2 bears the Phosphoserine mark. Residues 2 to 94 (SGGKYVDSEG…WKASFTTFTV (93 aa)) are required for homooligomerization. Over 2-104 (SGGKYVDSEG…TKYWFYRLLS (103 aa)) the chain is Cytoplasmic. K5 bears the N6-acetyllysine; alternate mark. K5 participates in a covalent cross-link: Glycyl lysine isopeptide (Lys-Gly) (interchain with G-Cter in ubiquitin); alternate. Y6 is subject to Phosphotyrosine. The residue at position 9 (S9) is a Phosphoserine. Y14 carries the post-translational modification Phosphotyrosine; by ABL1. Phosphotyrosine is present on Y25. Glycyl lysine isopeptide (Lys-Gly) (interchain with G-Cter in ubiquitin) cross-links involve residues K26, K30, K39, K47, and K57. The interval 82 to 94 (DGIWKASFTTFTV) is interaction with CAVIN3. The segment at residues 105-125 (GIFGIPMALIWGVYFAILSFL) is an intramembrane region (helical). Residues 126-178 (HIWAVVPCIKSFLIEIQCISRVYSIYVHTFCDPLFEAIGKIFSNIRISTQKEI) are Cytoplasmic-facing. The tract at residues 131 to 142 (VPCIKSFLIEIQ) is interacts with SPRY1, SPRY2, SPRY3 and SPRY4. S-palmitoyl cysteine attachment occurs at residues C133, C143, and C156. The interval 149 to 160 (SIYVHTFCDPLF) is interacts with SPRY1, SPRY2, and SPRY4. The interacts with SPRY1, SPRY2, SPRY3 and SPRY4 stretch occupies residues 167–178 (FSNIRISTQKEI).

Belongs to the caveolin family. Homooligomer. Interacts with GLIPR2. Interacts with NOSTRIN. Interacts with SNAP25 and STX1A. Interacts (via the N-terminus) with DPP4; the interaction is direct. Interacts with CTNNB1, CDH1 and JUP. Interacts with PACSIN2; this interaction induces membrane tubulation. Interacts with SLC7A9. Interacts with BMX and BTK. Interacts with TGFBR1. Interacts with CAVIN3 (via leucine-zipper domain) in a cholesterol-sensitive manner. Interacts with CAVIN1. Interacts with EHD2 in a cholesterol-dependent manner. Forms a ternary complex with UBXN6 and VCP; mediates CAV1 targeting to lysosomes for degradation. Interacts with ABCG1; this interaction regulates ABCG1-mediated cholesterol efflux. Interacts with NEU3; this interaction enhances NEU3 sialidase activity within caveola. Interacts (via C-terminus) with SPRY1, SPRY2 (via C-terminus), SPRY3, and SPRY4. Interacts with IGFBP5; this interaction allows trafficking of IGFBP5 from the plasma membrane to the nucleus. In terms of processing, phosphorylated at Tyr-14 by ABL1 in response to oxidative stress. Ubiquitinated. Undergo monoubiquitination and multi- and/or polyubiquitination. Monoubiquitination of N-terminal lysines promotes integration in a ternary complex with UBXN6 and VCP which promotes oligomeric CAV1 targeting to lysosomes for degradation. Ubiquitinated by ZNRF1; leading to degradation and modulation of the TLR4-mediated immune response.

It is found in the golgi apparatus membrane. Its subcellular location is the cell membrane. The protein localises to the membrane. It localises to the caveola. The protein resides in the membrane raft. May act as a scaffolding protein within caveolar membranes. Forms a stable heterooligomeric complex with CAV2 that targets to lipid rafts and drives caveolae formation. Mediates the recruitment of CAVIN proteins (CAVIN1/2/3/4) to the caveolae. Interacts directly with G-protein alpha subunits and can functionally regulate their activity. Involved in the costimulatory signal essential for T-cell receptor (TCR)-mediated T-cell activation. Its binding to DPP4 induces T-cell proliferation and NF-kappa-B activation in a T-cell receptor/CD3-dependent manner. Recruits CTNNB1 to caveolar membranes and may regulate CTNNB1-mediated signaling through the Wnt pathway. Negatively regulates TGFB1-mediated activation of SMAD2/3 by mediating the internalization of TGFBR1 from membrane rafts leading to its subsequent degradation. Binds 20(S)-hydroxycholesterol (20(S)-OHC). This Echinops telfairi (Lesser hedgehog tenrec) protein is Caveolin-1 (CAV1).